We begin with the raw amino-acid sequence, 521 residues long: Importin subunit alpha-3 (521 aa).

Residue A2 is modified to N-acetylalanine. Residues 2 to 58 enclose the IBB domain; sequence ADNEKLDNQRLKNFKNKGRDLETMRRQRNEVVVELRKNKRDEHLLKRRNVPHEDICE. The short motif at 43–52 is the Nuclear localization signal element; the sequence is EHLLKRRNVP. The residue at position 60 (S60) is a Phosphoserine. The stretch at 66–106 is one ARM 1; truncated repeat; the sequence is YRVQNTSLEAIVQNASSDNQGIQLSAVQAARKLLSSDRNPP. ARM repeat units lie at residues 107–149, 150–194, 195–233, 234–278, 279–318, 319–360, 361–400, and 401–443; these read IDDL…TSEQ, TQAV…CRDY, VISL…HKDP, PPPM…EQIQ, MVID…TDEQ, TQVV…NQQQ, VQAV…ISGR, and KDQV…KMAE. The segment at 137-229 is NLS binding site (major); it reads WALTNIASGT…VTWVMVNLCR (93 aa). The interval 306-394 is NLS binding site (minor); that stretch reads RAVGNIVTGT…QKEAAWAISN (89 aa). An ARM 10; atypical repeat occupies 447–485; that stretch reads ETIGNLIEECGGLEKIEQLQNHENEDIYKLAYEIIDQFF.

The protein belongs to the importin alpha family. As to quaternary structure, forms a complex with importin subunit beta-1 (KPNB1). Interacts with SNAI1. Interacts with TALDO1 isoform 1. Interacts with CYB1. In terms of assembly, (Microbial infection) Interacts with MERS virus protein OF4b; this interaction prevents the translocation of NF-kappa-B complex to the nucleus. (Microbial infection) Interacts with human adenovirus 5 E1A protein; this interaction allows E1A import into the host nucleus. As to quaternary structure, (Microbial infection) Interacts with Chikungunya virus capsid protein; this interaction allows the nuclear import of the viral capsid protein. As to expression, highly expressed in testis, ovary, small intestine, heart, skeletal muscle, lung and pancreas, but barely detectable in kidney, thymus, colon and peripheral blood leukocytes.

Its subcellular location is the cytoplasm. It localises to the nucleus. Functionally, functions in nuclear protein import as an adapter protein for nuclear receptor KPNB1. Binds specifically and directly to substrates containing either a simple or bipartite NLS motif. Docking of the importin/substrate complex to the nuclear pore complex (NPC) is mediated by KPNB1 through binding to nucleoporin FxFG repeats and the complex is subsequently translocated through the pore by an energy requiring, Ran-dependent mechanism. At the nucleoplasmic side of the NPC, Ran binds to importin-beta and the three components separate and importin-alpha and -beta are re-exported from the nucleus to the cytoplasm where GTP hydrolysis releases Ran from importin. The directionality of nuclear import is thought to be conferred by an asymmetric distribution of the GTP- and GDP-bound forms of Ran between the cytoplasm and nucleus. Mediates nuclear import of AARS1, MRTFA and RANBP3. Its function is as follows. (Microbial infection) In vitro, mediates the nuclear import of human cytomegalovirus UL84 by recognizing a non-classical NLS. In vitro, mediates the nuclear import of human cytomegalovirus UL84 by recognizing a non-classical NLS. The protein is Importin subunit alpha-3 of Homo sapiens (Human).